A 98-amino-acid chain; its full sequence is NADH-ubiquinone oxidoreductase chain 4L (98 aa).

A run of 3 helical transmembrane segments spans residues 1-21 (MSLV…GLLM), 25-45 (HLMS…ILST), and 67-87 (AACE…TYGV).

The protein belongs to the complex I subunit 4L family. In terms of assembly, core subunit of respiratory chain NADH dehydrogenase (Complex I) which is composed of 45 different subunits.

The protein resides in the mitochondrion inner membrane. The catalysed reaction is a ubiquinone + NADH + 5 H(+)(in) = a ubiquinol + NAD(+) + 4 H(+)(out). In terms of biological role, core subunit of the mitochondrial membrane respiratory chain NADH dehydrogenase (Complex I) which catalyzes electron transfer from NADH through the respiratory chain, using ubiquinone as an electron acceptor. Part of the enzyme membrane arm which is embedded in the lipid bilayer and involved in proton translocation. In Talpa europaea (European mole), this protein is NADH-ubiquinone oxidoreductase chain 4L (MT-ND4L).